Reading from the N-terminus, the 121-residue chain is Putative iron-sulfur cluster insertion protein ErpA (121 aa).

The iron-sulfur cluster site is built by Cys49, Cys113, and Cys115.

This sequence belongs to the HesB/IscA family. Homodimer. It depends on iron-sulfur cluster as a cofactor.

Functionally, required for insertion of 4Fe-4S clusters. The polypeptide is Putative iron-sulfur cluster insertion protein ErpA (Verminephrobacter eiseniae (strain EF01-2)).